Here is a 257-residue protein sequence, read N- to C-terminus: MRILLTNDDGIHAEGLAALERIARTMSDDVWIVAPETDQSGLAHSLSLSEPLRLRKVSDKHYALRGTPTDCVIMGIRQVMDIKPDLILSGVNSGSNVADDVTYSGTIAGAIEGTLQGVRSFALSQAYVHENGTRVVPWEVVQAHAPALLGKLIDIDLPDGTFLNLNFPNCRPDEVSGTEVTAQGNLAFNLQVDERADGRGFPYYWLRFGERSGIFRPGTDIHALKQNRISVTPLKLDLTDYSVQDRVARALGHGVAD.

4 residues coordinate a divalent metal cation: D8, D9, S40, and N92.

It belongs to the SurE nucleotidase family. A divalent metal cation serves as cofactor.

It localises to the cytoplasm. The enzyme catalyses a ribonucleoside 5'-phosphate + H2O = a ribonucleoside + phosphate. Nucleotidase that shows phosphatase activity on nucleoside 5'-monophosphates. This Rhizobium rhizogenes (strain K84 / ATCC BAA-868) (Agrobacterium radiobacter) protein is 5'-nucleotidase SurE.